We begin with the raw amino-acid sequence, 281 residues long: Transcription factor E2F6 (281 aa).

K9 participates in a covalent cross-link: Glycyl lysine isopeptide (Lys-Gly) (interchain with G-Cter in SUMO2). Residues 50 to 129 mediate DNA binding; sequence YVSMRKALKV…SKNHIRWIGS (80 aa). The DEF box signature appears at 95–129; it reads KLGVRKRRVYDITNVLDGIDLVEKKSKNHIRWIGS. Positions 130 to 222 are dimerization; it reads DLSNFGAVPQ…PAPREDSITV (93 aa). A leucine-zipper region spans residues 143-164; it reads LQEELSDLSAMEDALDELIKDC. The transcription repression stretch occupies residues 173-281; that stretch reads DDKENERLAY…QSEELLEVSN (109 aa). The segment at 241–281 is disordered; that stretch reads GQTSNKRSEGVGTSSSESTHPEGPEEEENPQQSEELLEVSN.

The protein belongs to the E2F/DP family. As to quaternary structure, forms heterodimers with DP family members TFDP1 or TFDP2. Component of the DRTF1/E2F transcription factor complex. Part of the E2F6.com-1 complex in G0 phase composed of E2F6, MGA, MAX, TFDP1, CBX3, BAT8, EUHMTASE1, RING1, RNF2, MBLR, L3MBTL2 and YAF2. Component of some MLL1/MLL complex, at least composed of the core components KMT2A/MLL1, ASH2L, HCFC1/HCF1, WDR5 and RBBP5, as well as the facultative components BACC1, CHD8, E2F6, HSP70, INO80C, KANSL1, LAS1L, MAX, MCRS1, MGA, KAT8/MOF, PELP1, PHF20, PRP31, RING2, RUVB1/TIP49A, RUVB2/TIP49B, SENP3, TAF1, TAF4, TAF6, TAF7, TAF9 and TEX10. In terms of tissue distribution, expressed in all tissues examined. Highest levels in placenta, skeletal muscle, heart, ovary, kidney, small intestine and spleen.

It is found in the nucleus. Inhibitor of E2F-dependent transcription. Binds DNA cooperatively with DP proteins through the E2 recognition site, 5'-TTTC[CG]CGC-3'. Has a preference for the 5'-TTTCCCGC-3' E2F recognition site. E2F6 lacks the transcriptional activation and pocket protein binding domains. Appears to regulate a subset of E2F-dependent genes whose products are required for entry into the cell cycle but not for normal cell cycle progression. Represses expression of some meiosis-specific genes, including SLC25A31/ANT4. May silence expression via the recruitment of a chromatin remodeling complex containing histone H3-K9 methyltransferase activity. Overexpression delays the exit of cells from the S-phase. In Homo sapiens (Human), this protein is Transcription factor E2F6.